The sequence spans 431 residues: O-phosphoseryl-tRNA(Sec) selenium transferase (431 aa).

Residues 1–36 (MRGLIPDHMLERGRTVLDSYREPVERLLSERRMPEE) are tetramerization. R67 contacts pyridoxal 5'-phosphate. The interval 88-98 (GRSGTLVDPQP) is phosphate loop (P-loop). 3 residues coordinate substrate: R89, S90, and Q97. K269 bears the N6-(pyridoxal phosphate)lysine mark. R298 contributes to the substrate binding site.

The protein belongs to the SepSecS family. As to quaternary structure, homotetramer. The cofactor is pyridoxal 5'-phosphate.

The catalysed reaction is O-phospho-L-seryl-tRNA(Sec) + selenophosphate + H2O = L-selenocysteinyl-tRNA(Sec) + 2 phosphate. It participates in aminoacyl-tRNA biosynthesis; selenocysteinyl-tRNA(Sec) biosynthesis; selenocysteinyl-tRNA(Sec) from L-seryl-tRNA(Sec) (archaeal/eukaryal route): step 2/2. Functionally, converts O-phosphoseryl-tRNA(Sec) to selenocysteinyl-tRNA(Sec) required for selenoprotein biosynthesis. The sequence is that of O-phosphoseryl-tRNA(Sec) selenium transferase (spcS) from Methanopyrus kandleri (strain AV19 / DSM 6324 / JCM 9639 / NBRC 100938).